A 408-amino-acid chain; its full sequence is Imidazolonepropionase (408 aa).

2 residues coordinate Fe(3+): histidine 73 and histidine 75. The Zn(2+) site is built by histidine 73 and histidine 75. The 4-imidazolone-5-propanoate site is built by arginine 82, tyrosine 145, and histidine 178. Position 145 (tyrosine 145) interacts with N-formimidoyl-L-glutamate. Histidine 243 contributes to the Fe(3+) binding site. Position 243 (histidine 243) interacts with Zn(2+). Position 246 (glutamine 246) interacts with 4-imidazolone-5-propanoate. Residue aspartate 318 participates in Fe(3+) binding. Position 318 (aspartate 318) interacts with Zn(2+). N-formimidoyl-L-glutamate is bound by residues asparagine 320 and glycine 322. Serine 323 serves as a coordination point for 4-imidazolone-5-propanoate.

Belongs to the metallo-dependent hydrolases superfamily. HutI family. It depends on Zn(2+) as a cofactor. Requires Fe(3+) as cofactor.

It localises to the cytoplasm. It catalyses the reaction 4-imidazolone-5-propanoate + H2O = N-formimidoyl-L-glutamate. It participates in amino-acid degradation; L-histidine degradation into L-glutamate; N-formimidoyl-L-glutamate from L-histidine: step 3/3. Its function is as follows. Catalyzes the hydrolytic cleavage of the carbon-nitrogen bond in imidazolone-5-propanoate to yield N-formimidoyl-L-glutamate. It is the third step in the universal histidine degradation pathway. In Shewanella baltica (strain OS155 / ATCC BAA-1091), this protein is Imidazolonepropionase.